The chain runs to 105 residues: MANLQQQKIRIRLKAFDHRLLDTSCEKIVDTAKRTSASAVGPIPLPTRRRIYCVLRSPHVDKDSREHFETRTHRRIIDIYQPSPKTIDALMKLDLPAGVDIEVKL.

The protein belongs to the universal ribosomal protein uS10 family. In terms of assembly, part of the 30S ribosomal subunit.

Its function is as follows. Involved in the binding of tRNA to the ribosomes. The polypeptide is Small ribosomal subunit protein uS10 (Cyanothece sp. (strain PCC 7425 / ATCC 29141)).